The sequence spans 119 residues: Large ribosomal subunit protein bL20c (119 aa).

It belongs to the bacterial ribosomal protein bL20 family.

It localises to the plastid. It is found in the chloroplast. Binds directly to 23S ribosomal RNA and is necessary for the in vitro assembly process of the 50S ribosomal subunit. It is not involved in the protein synthesizing functions of that subunit. In Nandina domestica (Heavenly bamboo), this protein is Large ribosomal subunit protein bL20c.